Consider the following 207-residue polypeptide: Dephospho-CoA kinase (207 aa).

The 203-residue stretch at 5 to 207 folds into the DPCK domain; that stretch reads IVGLTGGIAS…AALQTHRIEN (203 aa). 13 to 18 is an ATP binding site; that stretch reads ASGKSA.

It belongs to the CoaE family.

It is found in the cytoplasm. The catalysed reaction is 3'-dephospho-CoA + ATP = ADP + CoA + H(+). Its pathway is cofactor biosynthesis; coenzyme A biosynthesis; CoA from (R)-pantothenate: step 5/5. Catalyzes the phosphorylation of the 3'-hydroxyl group of dephosphocoenzyme A to form coenzyme A. This chain is Dephospho-CoA kinase, found in Xanthomonas campestris pv. campestris (strain ATCC 33913 / DSM 3586 / NCPPB 528 / LMG 568 / P 25).